Consider the following 110-residue polypeptide: Large ribosomal subunit protein uL22 (110 aa).

Belongs to the universal ribosomal protein uL22 family. As to quaternary structure, part of the 50S ribosomal subunit.

In terms of biological role, this protein binds specifically to 23S rRNA; its binding is stimulated by other ribosomal proteins, e.g. L4, L17, and L20. It is important during the early stages of 50S assembly. It makes multiple contacts with different domains of the 23S rRNA in the assembled 50S subunit and ribosome. The globular domain of the protein is located near the polypeptide exit tunnel on the outside of the subunit, while an extended beta-hairpin is found that lines the wall of the exit tunnel in the center of the 70S ribosome. This Shewanella baltica (strain OS223) protein is Large ribosomal subunit protein uL22.